Here is a 336-residue protein sequence, read N- to C-terminus: MKFYNREKELNYLKTYCQLDPNSILFVYGPKSSGKSTVMRRVIKELEDSNIVFFYYNLRKYATYSKEEFLRVFFEKSEKKYLLNKLELNLGVFKFGVEENFDFNNLKLNDVFAKINESINAVVEDGKKPVLIIDELQKLKNIYFNGGKSLLNELFNLFVSLTKMEHLCHVICLTSDTLFIEEIYQSSTLENTSKYYLIDWLRKGTIRNILKEEGFSEEEINYCLDYLSLPYEIVDLIENKKLGLSVEETIRQWINIEKDKIKYLIDTTDLDEEELYKVLSKFKDKIKISYEKEVKKEEMKYFKFLIKNEILFYDVINGIIKPTSVKKWYAIREILK.

29-36 (GPKSSGKS) serves as a coordination point for ATP.

Belongs to the archaeal ATPase family.

This is an uncharacterized protein from Methanocaldococcus jannaschii (strain ATCC 43067 / DSM 2661 / JAL-1 / JCM 10045 / NBRC 100440) (Methanococcus jannaschii).